Consider the following 281-residue polypeptide: Diaminopimelate epimerase (281 aa).

Positions 13 and 66 each coordinate substrate. C75 (proton donor) is an active-site residue. Substrate-binding positions include 76–77 (GN), N164, N197, and 215–216 (ER). C224 acts as the Proton acceptor in catalysis. 225 to 226 (GT) provides a ligand contact to substrate.

Belongs to the diaminopimelate epimerase family. Homodimer.

The protein localises to the cytoplasm. It catalyses the reaction (2S,6S)-2,6-diaminopimelate = meso-2,6-diaminopimelate. Its pathway is amino-acid biosynthesis; L-lysine biosynthesis via DAP pathway; DL-2,6-diaminopimelate from LL-2,6-diaminopimelate: step 1/1. Functionally, catalyzes the stereoinversion of LL-2,6-diaminopimelate (L,L-DAP) to meso-diaminopimelate (meso-DAP), a precursor of L-lysine and an essential component of the bacterial peptidoglycan. The chain is Diaminopimelate epimerase from Rippkaea orientalis (strain PCC 8801 / RF-1) (Cyanothece sp. (strain PCC 8801)).